The chain runs to 72 residues: Protein kish-A (72 aa).

Positions 1–26 (MSAIFNFQSLLIVILLLICTCAYLRA) are cleaved as a signal peptide. Topologically, residues 27–53 (LVPNLLDKNKTGILGIFWKCARIGERK) are extracellular. An N-linked (GlcNAc...) asparagine glycan is attached at asparagine 35. The helical transmembrane segment at 54-71 (SPYVAVCCVVMAFSILFM) threads the bilayer. A topological domain (cytoplasmic) is located at residue glutamine 72.

Belongs to the KISH family.

The protein localises to the golgi apparatus membrane. Functionally, involved in the early part of the secretory pathway. This is Protein kish-A (tmem167a) from Xenopus tropicalis (Western clawed frog).